Reading from the N-terminus, the 194-residue chain is Transcriptional repressor NrdR (194 aa).

A zinc finger lies at 3–33; the sequence is CPFCGHADDRVLDTRVQKDGSIRRRRECLEC. The ATP-cone domain occupies 48–138; it reads PFIIKKDGRR…VYRTFKDVQE (91 aa). The segment covering 168–179 has biased composition (basic and acidic residues); sequence ESEKSTNHETDS. Residues 168–194 form a disordered region; the sequence is ESEKSTNHETDSKTPSPRTRPPGPLSN. A compositionally biased stretch (pro residues) spans 185–194; that stretch reads RTRPPGPLSN.

It belongs to the NrdR family. It depends on Zn(2+) as a cofactor.

Functionally, negatively regulates transcription of bacterial ribonucleotide reductase nrd genes and operons by binding to NrdR-boxes. This chain is Transcriptional repressor NrdR, found in Bdellovibrio bacteriovorus (strain ATCC 15356 / DSM 50701 / NCIMB 9529 / HD100).